Here is a 145-residue protein sequence, read N- to C-terminus: Large ribosomal subunit protein uL13 (145 aa).

It belongs to the universal ribosomal protein uL13 family. In terms of assembly, part of the 50S ribosomal subunit.

Functionally, this protein is one of the early assembly proteins of the 50S ribosomal subunit, although it is not seen to bind rRNA by itself. It is important during the early stages of 50S assembly. In Staphylococcus carnosus (strain TM300), this protein is Large ribosomal subunit protein uL13.